The primary structure comprises 324 residues: Aspartate carbamoyltransferase catalytic subunit (324 aa).

Arg55 and Thr56 together coordinate carbamoyl phosphate. Residue Lys83 coordinates L-aspartate. Residues Arg105, His135, and Gln138 each contribute to the carbamoyl phosphate site. 2 residues coordinate L-aspartate: Arg173 and Arg227. Carbamoyl phosphate is bound by residues Gly268 and Pro269.

This sequence belongs to the aspartate/ornithine carbamoyltransferase superfamily. ATCase family. As to quaternary structure, heterododecamer (2C3:3R2) of six catalytic PyrB chains organized as two trimers (C3), and six regulatory PyrI chains organized as three dimers (R2).

The catalysed reaction is carbamoyl phosphate + L-aspartate = N-carbamoyl-L-aspartate + phosphate + H(+). The protein operates within pyrimidine metabolism; UMP biosynthesis via de novo pathway; (S)-dihydroorotate from bicarbonate: step 2/3. Functionally, catalyzes the condensation of carbamoyl phosphate and aspartate to form carbamoyl aspartate and inorganic phosphate, the committed step in the de novo pyrimidine nucleotide biosynthesis pathway. This is Aspartate carbamoyltransferase catalytic subunit from Nocardioides sp. (strain ATCC BAA-499 / JS614).